Consider the following 221-residue polypeptide: Protein GrpE (221 aa).

A disordered region spans residues methionine 1 to alanine 43. Over residues arginine 8–asparagine 20 the composition is skewed to basic and acidic residues.

This sequence belongs to the GrpE family. In terms of assembly, homodimer.

The protein localises to the cytoplasm. Its function is as follows. Participates actively in the response to hyperosmotic and heat shock by preventing the aggregation of stress-denatured proteins, in association with DnaK and GrpE. It is the nucleotide exchange factor for DnaK and may function as a thermosensor. Unfolded proteins bind initially to DnaJ; upon interaction with the DnaJ-bound protein, DnaK hydrolyzes its bound ATP, resulting in the formation of a stable complex. GrpE releases ADP from DnaK; ATP binding to DnaK triggers the release of the substrate protein, thus completing the reaction cycle. Several rounds of ATP-dependent interactions between DnaJ, DnaK and GrpE are required for fully efficient folding. In Deinococcus radiodurans (strain ATCC 13939 / DSM 20539 / JCM 16871 / CCUG 27074 / LMG 4051 / NBRC 15346 / NCIMB 9279 / VKM B-1422 / R1), this protein is Protein GrpE.